Here is a 364-residue protein sequence, read N- to C-terminus: MREYKIAAIPADGIGPEVIAAGLQVLEALEQRSGDFKIHTETFDWGSDYYKKHGVMMPADGLDKLKKFDAIFFGAVGAPDVPDHITLWGLRLPICQGFDQYANVRPTKILPGITPPLRNCGPGDLDWVIVRENSEGEYSGHGGRAHRGLPEEVGTEVAIFTRVGVTRIMRYAFKLAQARPRKLLTVVTKSNAQRHGMVMWDEIAAEVATEFPDVTWDKMLVDAMTVRMTLKPETLDTIVATNLHADILSDLAGALAGSLGVAPTANIDPERRFPSMFEPIHGSAFDITGKGIANPIATFWTAAQMLEHLGERDAAARLMSAVERVTEAGILTPDVGGTANTRQVTEAVCNAIAGSNILKMAAAE.

The Mn(2+) site is built by Asp222, Asp246, and Asp250.

It belongs to the isocitrate and isopropylmalate dehydrogenases family. The cofactor is Mg(2+). Mn(2+) is required as a cofactor. Requires K(+) as cofactor.

The protein localises to the cytoplasm. The enzyme catalyses tartrate + NAD(+) = 2-hydroxy-3-oxosuccinate + NADH + H(+). It catalyses the reaction (2R,3S)-tartrate + NAD(+) = 2-hydroxy-3-oxosuccinate + NADH + H(+). The catalysed reaction is (2R,3R)-tartrate + NAD(+) = 2-hydroxy-3-oxosuccinate + NADH + H(+). It carries out the reaction (2R,3R)-tartrate + H(+) = (R)-glycerate + CO2. The enzyme catalyses (R)-malate + NAD(+) = pyruvate + CO2 + NADH. It functions in the pathway carbohydrate acid metabolism; tartrate degradation; 2-hydroxy-3-oxosuccinate from L-tartrate: step 1/1. The protein operates within carbohydrate acid metabolism; tartrate degradation; 2-hydroxy-3-oxosuccinate from meso-tartrate: step 1/1. Its pathway is carbohydrate acid metabolism; tartrate degradation; D-glycerate from L-tartrate: step 1/1. Has multiple catalytic activities. Apart from catalyzing the oxidation of (+)-tartrate to oxaloglycolate, also converts meso-tartrate to D-glycerate and catalyzes the oxidative decarboxylation of D-malate to pyruvate. This is Probable tartrate dehydrogenase/decarboxylase TtuC (ttuC) from Agrobacterium vitis (Rhizobium vitis).